The sequence spans 259 residues: Phosphatidylglycerol--prolipoprotein diacylglyceryl transferase (259 aa).

The next 4 membrane-spanning stretches (helical) occupy residues 16-36, 55-75, 92-112, and 117-137; these read FAISWYSLSYVIGILLGWFYA, FITYAVIGIIVGGRLGFVLLY, QGGMSFHGGALGVIIAAYLFC, and VNFLSLTDIIATVVPIGLFLG. Residue R138 participates in a 1,2-diacyl-sn-glycero-3-phospho-(1'-sn-glycerol) binding. 3 helical membrane passes run 172–192, 201–221, and 228–248; these read QLYEAFFEGLVLFCILAYATF, ALNLGLFLTFYALFRITIEIF, and IGFILDSLTMGQILSIPMLIL.

This sequence belongs to the Lgt family.

It is found in the cell inner membrane. The enzyme catalyses L-cysteinyl-[prolipoprotein] + a 1,2-diacyl-sn-glycero-3-phospho-(1'-sn-glycerol) = an S-1,2-diacyl-sn-glyceryl-L-cysteinyl-[prolipoprotein] + sn-glycerol 1-phosphate + H(+). The protein operates within protein modification; lipoprotein biosynthesis (diacylglyceryl transfer). Catalyzes the transfer of the diacylglyceryl group from phosphatidylglycerol to the sulfhydryl group of the N-terminal cysteine of a prolipoprotein, the first step in the formation of mature lipoproteins. The polypeptide is Phosphatidylglycerol--prolipoprotein diacylglyceryl transferase (Rickettsia canadensis (strain McKiel)).